Consider the following 176-residue polypeptide: MNKDDDKEGMAMFSALIEGIKPITQDKRHFRTPLKTKQEIELKEQQLHANSYFSDTYQPLLPVQGPMRWLDEGVDSLELKRLRRGDYQPDLLLDLHGYRQSEAKLELAALIQACVKQQSQCCCVMHGYGTGILKQQVPMWLVQHPMVKAFHQAPKEWGGDAALLVLIDIGDQPHRR.

Positions 93 to 168 (LDLHGYRQSE…GDAALLVLID (76 aa)) constitute a Smr domain.

It belongs to the SmrB family. In terms of assembly, associates with collided ribosomes, but not with correctly translating polysomes.

Functionally, acts as a ribosome collision sensor. Detects stalled/collided disomes (pairs of ribosomes where the leading ribosome is stalled and a second ribosome has collided with it) and endonucleolytically cleaves mRNA at the 5' boundary of the stalled ribosome. Stalled/collided disomes form a new interface (primarily via the 30S subunits) that binds SmrB. Cleaved mRNA becomes available for tmRNA ligation, leading to ribosomal subunit dissociation and rescue of stalled ribosomes. The sequence is that of Ribosome rescue factor SmrB from Shewanella oneidensis (strain ATCC 700550 / JCM 31522 / CIP 106686 / LMG 19005 / NCIMB 14063 / MR-1).